Here is a 526-residue protein sequence, read N- to C-terminus: MAAIVAALRGSSGRFRPQTRVLTRGTRGAAGAASAAGGQQNFDLLVIGGGSGGLACAKEAAQLGRKVAVADYVEPSPRGTKWGLGGTCVNVGCIPKKLMHQAALLGGMIRDAQHYGWEVAQPVQHNWKAMAEAVQNHVKSLNWGHRVQLQDRKVKYFNIKASFVNEHTVHGVDKAGKVTQLSAKHIVIATGGRPKYPTQVKGALEHGITSDDIFWLKESPGKTLVVGASYVALECAGFLTGIGLDTTVMMRSVPLRGFDQQMASLVTEHMESHGTRFLKGCVPSLIRKLPTNQLQVTWEDLASGKEDVGTFDTVLWAIGRVPETRNLNLEKAGVNTNPKNQKIIVDAQEATSVPHIYAIGDVAEGRPELTPTAIKAGKLLAQRLFGKSSTLMNYSNVPTTVFTPLEYGCVGLSEEEAVALHGQEHIEVYHAYYKPLEFTVADRDASQCYIKMVCMREPPQLVLGLHFLGPNAGEVTQGFALGIQCGASYAQVMQTVGIHPTCSEEVVKLHISKRSGLDPTVTGCUG.

The transit peptide at 1–36 (MAAIVAALRGSSGRFRPQTRVLTRGTRGAAGAASAA) directs the protein to the mitochondrion. 43–72 (DLLVIGGGSGGLACAKEAAQLGRKVAVADY) contributes to the FAD binding site. Residue K81 is modified to N6-succinyllysine. A disulfide bond links C88 and C93. N6-succinyllysine is present on residues K177 and K331. H499 (proton acceptor) is an active-site residue. A cross-link (cysteinyl-selenocysteine (Cys-Sec)) is located at residues 524 to 525 (CU). Residue U525 is a non-standard amino acid, selenocysteine.

This sequence belongs to the class-I pyridine nucleotide-disulfide oxidoreductase family. Homodimer. The cofactor is FAD. Expressed in liver, kidney, adrenal gland and heart.

The protein resides in the mitochondrion. It carries out the reaction [thioredoxin]-dithiol + NADP(+) = [thioredoxin]-disulfide + NADPH + H(+). Involved in the control of reactive oxygen species levels and the regulation of mitochondrial redox homeostasis. Maintains mitochondrial thioredoxin in a reduced state. May play a role in redox-regulated cell signaling. This is Thioredoxin reductase 2, mitochondrial (Txnrd2) from Rattus norvegicus (Rat).